Reading from the N-terminus, the 82-residue chain is Small ribosomal subunit protein uS17 (82 aa).

Belongs to the universal ribosomal protein uS17 family. In terms of assembly, part of the 30S ribosomal subunit.

Functionally, one of the primary rRNA binding proteins, it binds specifically to the 5'-end of 16S ribosomal RNA. In Shewanella pealeana (strain ATCC 700345 / ANG-SQ1), this protein is Small ribosomal subunit protein uS17.